The sequence spans 254 residues: MQNAIATIKETNPIVLTVANNVTPADVANGLNALGASPMMSQTPEEADDMVNIAQAAAINLGTLNPHQRGEMEAVMEAAKKYHKPTVLDPVACGATMYRLRVVTELLHQYHFTVIRGNAGEIATLAGVEWQSHGIDAGEGNADLEKVARLAAEKLGSVIVLSGEVDIVTDSTRLARLPYGSPAFKTHVGTGDMLSSLIGAFLATNDDAFDAAVDAVTTFTLCGQAVEDQRPGNWYPGLLNNLDAVTDQQLAAWQ.

Methionine 40 is a binding site for substrate. Residues arginine 116 and serine 162 each coordinate ATP. Position 189 (glycine 189) interacts with substrate.

The protein belongs to the Thz kinase family. Requires Mg(2+) as cofactor.

The catalysed reaction is 5-(2-hydroxyethyl)-4-methylthiazole + ATP = 4-methyl-5-(2-phosphooxyethyl)-thiazole + ADP + H(+). The protein operates within cofactor biosynthesis; thiamine diphosphate biosynthesis; 4-methyl-5-(2-phosphoethyl)-thiazole from 5-(2-hydroxyethyl)-4-methylthiazole: step 1/1. Catalyzes the phosphorylation of the hydroxyl group of 4-methyl-5-beta-hydroxyethylthiazole (THZ). In Limosilactobacillus fermentum (strain NBRC 3956 / LMG 18251) (Lactobacillus fermentum), this protein is Hydroxyethylthiazole kinase.